We begin with the raw amino-acid sequence, 277 residues long: Protein HEAT-INDUCED TAS1 TARGET 1 (277 aa).

Belongs to the heat induced plant HTT protein family. As to quaternary structure, interacts with the heat shock proteins HSP70-14 and At2g33735/HSP40, and with NFYC2 in both cytoplasm and nucleus. In terms of tissue distribution, expressed ubiquitously, including in seedlings, leaves, stems, inflorescences and siliques.

Its subcellular location is the cytoplasm. It localises to the nucleus. In terms of biological role, mediates both basal and acquired thermotolerance via HSFA1s-directed pathways (e.g. HSFA1A, HSFA1B, and HSFA1D). Triggers the expression of HSFA1A and HSFA1B. This chain is Protein HEAT-INDUCED TAS1 TARGET 1, found in Arabidopsis thaliana (Mouse-ear cress).